Here is a 409-residue protein sequence, read N- to C-terminus: Probable peptidoglycan glycosyltransferase FtsW (409 aa).

Helical transmembrane passes span 42–62, 72–92, 108–128, 135–155, 178–198, 213–233, 303–323, 337–357, and 368–388; these read LFTLAMALLAFGFVMVTSASL, PFHFAIRHGIYILISLAVMLA, LLLLGLIMLLMVLVVGYEVNG, VGPITFQAAEVAKLFFCIYMA, LLFIAAVLLLMQPDFGTVVVL, LWQFFAVFITCVLALILLIIV, FLGVLAVIATVLMLVWRALII, YLAYGIGIWFSIQAFVNIGVA, and LPLVSYGGNSLIISALAVGLL.

This sequence belongs to the SEDS family. FtsW subfamily.

The protein resides in the cell inner membrane. It catalyses the reaction [GlcNAc-(1-&gt;4)-Mur2Ac(oyl-L-Ala-gamma-D-Glu-L-Lys-D-Ala-D-Ala)](n)-di-trans,octa-cis-undecaprenyl diphosphate + beta-D-GlcNAc-(1-&gt;4)-Mur2Ac(oyl-L-Ala-gamma-D-Glu-L-Lys-D-Ala-D-Ala)-di-trans,octa-cis-undecaprenyl diphosphate = [GlcNAc-(1-&gt;4)-Mur2Ac(oyl-L-Ala-gamma-D-Glu-L-Lys-D-Ala-D-Ala)](n+1)-di-trans,octa-cis-undecaprenyl diphosphate + di-trans,octa-cis-undecaprenyl diphosphate + H(+). It functions in the pathway cell wall biogenesis; peptidoglycan biosynthesis. Functionally, peptidoglycan polymerase that is essential for cell division. This Idiomarina loihiensis (strain ATCC BAA-735 / DSM 15497 / L2-TR) protein is Probable peptidoglycan glycosyltransferase FtsW.